Consider the following 266-residue polypeptide: Non-structural maintenance of chromosomes element 1 homolog (266 aa).

Residues 1-102 (MQGNTRRTGV…SVSKMASDFA (102 aa)) form an interaction with NSMCE3 region. The segment at 191-232 (CNICRSLLIQGQSCETCGIRMHLPCVAKYFQSSSEPHCPHCN) adopts an RING-type; atypical zinc-finger fold. Residues 243–252 (FDPEKERETG) show a composition bias toward basic and acidic residues. Residues 243-266 (FDPEKERETGMSRSNKRPSRSRQH) are disordered. A compositionally biased stretch (basic residues) spans 256-266 (SNKRPSRSRQH).

The protein belongs to the NSE1 family. In terms of assembly, component of the SMC5-SMC6 complex which consists at least of SMC5, SMC6, NSMCE2, NSMCE1, NSMCE4A or EID3 and NSMCE3. NSMCE1, NSMCE4A or EID3 and NSMCE3 probably form a subcomplex that bridges the head domains of the SMC5-SMC6 heterodimer. Interacts with NSMCE3. Post-translationally, ubiquitinated.

It is found in the nucleus. Its subcellular location is the chromosome. The protein resides in the telomere. The enzyme catalyses S-ubiquitinyl-[E2 ubiquitin-conjugating enzyme]-L-cysteine + [acceptor protein]-L-lysine = [E2 ubiquitin-conjugating enzyme]-L-cysteine + N(6)-ubiquitinyl-[acceptor protein]-L-lysine.. Its function is as follows. RING-type zinc finger-containing E3 ubiquitin ligase that assembles with melanoma antigen protein (MAGE) to catalyze the direct transfer of ubiquitin from E2 ubiquitin-conjugating enzyme to a specific substrate. Within MAGE-RING ubiquitin ligase complex, MAGE stimulates and specifies ubiquitin ligase activity likely through recruitment and/or stabilization of the E2 ubiquitin-conjugating enzyme at the E3:substrate complex. Involved in maintenance of genome integrity, DNA damage response and DNA repair. NSMCE3/MAGEG1 and NSMCE1 ubiquitin ligase are components of SMC5-SMC6 complex and may positively regulate homologous recombination-mediated DNA repair. This is Non-structural maintenance of chromosomes element 1 homolog (NSMCE1) from Bos taurus (Bovine).